A 47-amino-acid polypeptide reads, in one-letter code: Protein YqgG (47 aa).

This is Protein YqgG from Escherichia coli (strain K12).